The primary structure comprises 426 residues: Enolase (426 aa).

Q163 is a binding site for (2R)-2-phosphoglycerate. E205 functions as the Proton donor in the catalytic mechanism. D242, E283, and D310 together coordinate Mg(2+). Residues K335, R364, S365, and K386 each coordinate (2R)-2-phosphoglycerate. K335 serves as the catalytic Proton acceptor.

This sequence belongs to the enolase family. It depends on Mg(2+) as a cofactor.

The protein resides in the cytoplasm. It localises to the secreted. The protein localises to the cell surface. The enzyme catalyses (2R)-2-phosphoglycerate = phosphoenolpyruvate + H2O. Its pathway is carbohydrate degradation; glycolysis; pyruvate from D-glyceraldehyde 3-phosphate: step 4/5. Catalyzes the reversible conversion of 2-phosphoglycerate (2-PG) into phosphoenolpyruvate (PEP). It is essential for the degradation of carbohydrates via glycolysis. The polypeptide is Enolase (Pseudarthrobacter chlorophenolicus (strain ATCC 700700 / DSM 12829 / CIP 107037 / JCM 12360 / KCTC 9906 / NCIMB 13794 / A6) (Arthrobacter chlorophenolicus)).